The following is a 439-amino-acid chain: tRNA-2-methylthio-N(6)-dimethylallyladenosine synthase (439 aa).

One can recognise an MTTase N-terminal domain in the interval 2–116; it reads LKVYIETMGC…ISQVIHKEKA (115 aa). [4Fe-4S] cluster contacts are provided by Cys-11, Cys-47, Cys-79, Cys-149, Cys-153, and Cys-156. In terms of domain architecture, Radical SAM core spans 135–368; that stretch reads KKAEVRSLLN…QNRHKEILEE (234 aa). Residues 371–437 form the TRAM domain; that stretch reads RLEVGKTHVV…KGRLMATTKN (67 aa).

This sequence belongs to the methylthiotransferase family. MiaB subfamily. In terms of assembly, monomer. It depends on [4Fe-4S] cluster as a cofactor.

It localises to the cytoplasm. The enzyme catalyses N(6)-dimethylallyladenosine(37) in tRNA + (sulfur carrier)-SH + AH2 + 2 S-adenosyl-L-methionine = 2-methylsulfanyl-N(6)-dimethylallyladenosine(37) in tRNA + (sulfur carrier)-H + 5'-deoxyadenosine + L-methionine + A + S-adenosyl-L-homocysteine + 2 H(+). Functionally, catalyzes the methylthiolation of N6-(dimethylallyl)adenosine (i(6)A), leading to the formation of 2-methylthio-N6-(dimethylallyl)adenosine (ms(2)i(6)A) at position 37 in tRNAs that read codons beginning with uridine. The protein is tRNA-2-methylthio-N(6)-dimethylallyladenosine synthase of Helicobacter acinonychis (strain Sheeba).